We begin with the raw amino-acid sequence, 171 residues long: CASP-like protein 0U2 (171 aa).

Residues 1-22 are Cytoplasmic-facing; the sequence is MPVFGLAALKLNWEALSTPKFR. A helical membrane pass occupies residues 23–42; it reads VTFAQWVCSLLMWSLMASYS. At 43–48 the chain is on the extracellular side; that stretch reads KHGEFK. A helical transmembrane segment spans residues 49 to 69; the sequence is FVVVFGLVMWGLASTYLVYQL. Over 70 to 77 the chain is Cytoplasmic; that stretch reads LNGPPLAP. A helical membrane pass occupies residues 78–98; it reads IVEFWANVAAGSLAFICLVLA. At 99–121 the chain is on the extracellular side; the sequence is SATCNRAVGEPQTKVCSGELKPK. A helical transmembrane segment spans residues 122 to 142; the sequence is ASAAFAFLLLCAYGGLAYLSW. Topologically, residues 143 to 171 are cytoplasmic; sequence RTWRNPPTIASYALHDDPEFAQPLHSSHK.

This sequence belongs to the Casparian strip membrane proteins (CASP) family. In terms of assembly, homodimer and heterodimers.

It is found in the cell membrane. This chain is CASP-like protein 0U2, found in Chlorokybus atmophyticus (Soil alga).